The primary structure comprises 822 residues: Calpain-3 (822 aa).

The tract at residues 1–36 is disordered; the sequence is MPTVISASVAPRTGAEPRSPGPIAQAAQGKGTEAGG. The 345-residue stretch at 74–418 folds into the Calpain catalytic domain; sequence LFVDPEFPPD…FTKLEICNLT (345 aa). Residues Cys-129, His-335, and Asn-359 contribute to the active site. The segment at 419 to 587 is domain III; it reads ADALESDKLQ…KRNLSEEVEN (169 aa). Residues 588-649 form a linker region; that stretch reads TISVDRPVKK…LKPGNIDQES (62 aa). Residues 600 to 651 are disordered; it reads PKPIIFGSDRANSNKELGVDQESEEGKDNTSPDKQAKSPQLKPGNIDQESKE. Positions 623–635 are enriched in basic and acidic residues; the sequence is EEGKDNTSPDKQA. 4 consecutive EF-hand domains span residues 650–684, 693–726, 723–758, and 788–822; these read KEQR…VVNK, FTLE…KKIK, KKIK…AGFH, and VRLE…TMYA. The tract at residues 650-822 is domain IV; that stretch reads KEQRQFRNIF…LEWLQLTMYA (173 aa). Residues Ala-663, Asp-666, Glu-668, Glu-673, Asp-706, Asp-708, Ser-710, Arg-712, Glu-717, Asp-736, Asp-738, Ser-740, Thr-742, Glu-747, Asp-801, Asp-803, Asp-805, and Ile-807 each contribute to the Ca(2+) site.

The protein belongs to the peptidase C2 family. Homodimer; via EF-hand domain 4. Interacts with TTN/titin. Interacts with CMYA5; this interaction, which results in CMYA5 proteolysis, may protect CAPN3 from autolysis. Interacts with SIMC1. Interacts with UTP25; the interaction is required for CAPN3 translocation to the nucleolus. Skeletal muscle.

It is found in the cytoplasm. It localises to the nucleus. The protein localises to the nucleolus. It catalyses the reaction Broad endopeptidase activity.. Its activity is regulated as follows. Activated by micromolar concentrations of calcium and inhibited by calpastatin. Its function is as follows. Calcium-regulated non-lysosomal thiol-protease. Proteolytically cleaves CTBP1. Mediates, with UTP25, the proteasome-independent degradation of p53/TP53. The sequence is that of Calpain-3 (CAPN3) from Ovis aries (Sheep).